A 187-amino-acid polypeptide reads, in one-letter code: UPF0301 protein ESA_00394 (187 aa).

Belongs to the UPF0301 (AlgH) family.

The polypeptide is UPF0301 protein ESA_00394 (Cronobacter sakazakii (strain ATCC BAA-894) (Enterobacter sakazakii)).